Consider the following 1442-residue polypeptide: MDYDPAHAMSRGGSMRQTISRSVSKASRNMEDIFNTSSRRTKSVNEDEEALKWASIEKLPTYNRLRTSLMPELGEDDVYGNQILNKAVDVTKLDGEERQKFIDMVFKVAEQDNERILTKLRNRIDRVGIQLPTVEVRYDHLTVKADCYTGDRSLPSLLNAVRNMGEAALGMIGIRLAKKAQLTILKDVSGIVKPSRMTLLLGPPSSGKTTLLLALAGKLDKSLDVSGEVTYNGYRLNEFVPIKTSAYISQNDLHVGIMTVKETLDFSARCQGVGTRYDLLNELARREKDAGIFPEADVDLFMKASAAQGVKSSLITDYTLKILGLDICKDTIVGDDMMRGISGGQKKRVTTGEMIVGPTKTLFMDEISTGLDSSTTFQIVKCLQQIVHLTEATVLISLLQPAPETFDLFDDIILLSEGQIVYQGPRDHILEFFESFGFKCPERKGTADFLQEVTSKKDQEQYWVDPNRPYRYIPVSEFASSFKKFHVGSKLSNELSVPYDKSKSHKAALMFDKYSIKKTELLKSCWDKEWMLMKRNSFFYVFKTVQIIIIAAITSTLYLRTEMHTRNEIDANIYVGSLLFAMIVNMFNGLAEMAMTIQRLPVFYKQRDLLFHPPWTYTLPTFLLGIPISIFESTAWMVVTYYSIGYAPDAERFFKQFLIIFLIQQMAAGIFRFIASTCRTMTIANTGGVLVLLVVFLTGGFLLPRSEIPVWWRWAYWISPLSYAFNAITVNELFAPRWMNKMSGNSTTRLGTSVLNIWDVFDDKNWYWIGVGGLLGFTVIFNGFFTLALTYLDPLGKAQAILPKEEDEEAKGKAGSNKETEMESVSAKKGMVLPFTPLAMSFDDVKYFVDMPAEMREQGVQETRLQLLKGVTSAFRPGVLTALMGVSGAGKTTLMDVLAGRKTGGYIEGDVRVSGFPKKQETFARISGYCEQTDIHSPQVTVRESLIFSAFLRLAKEVSKEDKLMFVDQVMELVELVDLRDAIVGLPGVTGLSTEQRKRLTIAVELVANPSIIFMDEPTSGLDARAAAIVMRAVRNTVDTGRTVVCTIHQPSIDIFEAFDELLLMKRGGHVIYSGPLGRNSHKVVEYFESFPGVPKIPEKYNPATWMLEASSLAAELKLGVDFAELYKASALCQRNKALVQELSVPPQGATDLYFATQFSQNTWGQFKSCLWKQWWTYWRSPDYNLVRFIFTLATSLMIGSVFWQIGGKRSNVQDLTMVIGAIYAAVVFVGINNCSTVQPMVAVERTVFYREKAAGMYSAIPYAISQVTCELPYVLIQTTYYSLIIYSMVGFEWKASKFLWFIFINYFSFLYWTYYGMMTVSLTPNQQVASIFASAFYGIFNLFSGFFIPRPKIPKWWVWYYWICPVAWTIYGLITSQYGDVETPIALLGGAPGLTVKQYIKDQYGFESDYMGPVAGVLVGFTVFFAFIFAFCIKTLNFQSR.

Positions 169 to 442 constitute an ABC transporter 1 domain; that stretch reads LGMIGIRLAK…FESFGFKCPE (274 aa). Position 202-209 (202-209) interacts with ATP; that stretch reads GPPSSGKT. An ABC transmembrane type-2 1 domain is found at 520–733; sequence ELLKSCWDKE…AFNAITVNEL (214 aa). The next 7 helical transmembrane spans lie at 538-558, 573-593, 619-639, 657-677, 683-703, 714-734, and 769-789; these read FFYVFKTVQIIIIAAITSTLY, IYVGSLLFAMIVNMFNGLAEM, LPTFLLGIPISIFESTAWMVV, FLIIFLIQQMAAGIFRFIAST, IANTGGVLVLLVVFLTGGFLL, WAYWISPLSYAFNAITVNELF, and IGVGGLLGFTVIFNGFFTLAL. The ABC transporter 2 domain maps to 840 to 1092; it reads MSFDDVKYFV…KVVEYFESFP (253 aa). Residue 885–892 participates in ATP binding; that stretch reads GVSGAGKT. The 215-residue stretch at 1165 to 1379 folds into the ABC transmembrane type-2 2 domain; it reads GQFKSCLWKQ…TIYGLITSQY (215 aa). A run of 7 helical transmembrane segments spans residues 1186–1206, 1218–1238, 1272–1292, 1299–1319, 1329–1349, 1357–1377, and 1414–1434; these read LVRFIFTLATSLMIGSVFWQI, MVIGAIYAAVVFVGINNCSTV, LPYVLIQTTYYSLIIYSMVGF, FLWFIFINYFSFLYWTYYGMM, VASIFASAFYGIFNLFSGFFI, WWVWYYWICPVAWTIYGLITS, and PVAGVLVGFTVFFAFIFAFCI.

It belongs to the ABC transporter superfamily. ABCG family. PDR (TC 3.A.1.205) subfamily. Ubiquitous with higher levels in roots.

It is found in the membrane. Functionally, may be a general defense protein. This Arabidopsis thaliana (Mouse-ear cress) protein is ABC transporter G family member 35 (ABCG35).